The sequence spans 416 residues: Probable carboxypeptidase An18g06210 (416 aa).

An N-terminal signal peptide occupies residues 1 to 16; that stretch reads MKSPISLLAAVGVASA. N-linked (GlcNAc...) asparagine glycans are attached at residues Asn54, Asn70, and Asn129. Zn(2+) is bound at residue Asp142. The active-site Proton acceptor is Glu174. Glu175 is a binding site for Zn(2+). N-linked (GlcNAc...) asparagine glycans are attached at residues Asn187 and Asn319.

This sequence belongs to the peptidase M20A family. Zn(2+) is required as a cofactor.

It localises to the secreted. In Aspergillus niger (strain ATCC MYA-4892 / CBS 513.88 / FGSC A1513), this protein is Probable carboxypeptidase An18g06210.